The chain runs to 59 residues: Small integral membrane protein 30 (59 aa).

Positions Met-1–Ala-24 are cleaved as a signal peptide. The Extracellular segment spans residues Val-25–Asp-29. A helical transmembrane segment spans residues Ala-30–Ile-50. The Cytoplasmic portion of the chain corresponds to Tyr-51–Met-59.

In terms of assembly, interacts (via transmembrane domain) with antiviral protein MAVS (via transmembrane domain); the interaction disrupts MAVS interaction with RIGI and inhibits MAVS aggregation, resulting in the repression of type I interferon signaling and innate immune responses.

The protein resides in the endoplasmic reticulum membrane. The protein localises to the mitochondrion membrane. Functionally, negatively regulates antiviral innate immune responses. Disrupts the interaction of antiviral protein MAVS with innate immune receptor RIGI and inhibits MAVS aggregation, resulting in the repression of type I interferon signaling and innate immune responses. The protein is Small integral membrane protein 30 of Mus musculus (Mouse).